Consider the following 363-residue polypeptide: MEVGVFIPIGNNGWLLSENAPQYKPSFDLNKAITLKAEQYGFDFALSMIKLRGFGGKTEFWDYNLESFTLMAGLAAVTSKIKLFGTAATLVMPPAIVARMATTIDSISGGRFGINLITGWQRPEYSQMGLWPGDDYFGDRYEYLGEYTSVLKELLTEGQSDFKGKFFQMDDCRMKPVPQGDVKLICAGSSNSGMAFSAKFADYSFCFGVGVNTPKAFAPTNERLLAATEKSGREVKSVVLTMVLAEEKSEDAWAKWEHYKAGADEDAIKWLGLQSAVDTKSGSDTNVRHMSNPVSAVNINMGTLIGSYEEVAAMLDEMSEVPGTGGVMLTFDDFLEGVEKFGKYVQPLMKSRQHVLAELEAAE.

FMN is bound by residues 49-50 (IK), Asn-115, Glu-124, 140-141 (RY), and Ser-190.

This sequence belongs to the NtaA/SnaA/DszA monooxygenase family. RutA subfamily.

It carries out the reaction uracil + FMNH2 + NADH + O2 = (Z)-3-ureidoacrylate + FMN + NAD(+) + H2O + H(+). The enzyme catalyses thymine + FMNH2 + NADH + O2 = (Z)-2-methylureidoacrylate + FMN + NAD(+) + H2O + H(+). Its function is as follows. Catalyzes the pyrimidine ring opening between N-3 and C-4 by an unusual flavin hydroperoxide-catalyzed mechanism, adding oxygen atoms in the process to yield ureidoacrylate peracid, that immediately reacts with FMN forming ureidoacrylate and FMN-N(5)-oxide. The FMN-N(5)-oxide reacts spontaneously with NADH to produce FMN. Requires the flavin reductase RutF to regenerate FMN in vivo. This is Pyrimidine monooxygenase RutA (rutA) from Agrobacterium fabrum (strain C58 / ATCC 33970) (Agrobacterium tumefaciens (strain C58)).